The sequence spans 137 residues: MKINRPLSPHLTIYKPQLTSTFSIFHRISGAFLATMVLFSILFFKIGDLSLTFYHFYQYFFFLTFYLNWFIISLVNFTLLALCYHMSNGVRHLLWDLGFFLELSKVYTSGIIMLFCAAFLALLNIIRQHWSNGQIPY.

The next 2 helical transmembrane spans lie at 31-51 (AFLATMVLFSILFFKIGDLSL) and 60-80 (FFFLTFYLNWFIISLVNFTLL). Heme is bound at residue histidine 85. The chain crosses the membrane as a helical span at residues 106-126 (VYTSGIIMLFCAAFLALLNII).

The protein belongs to the cytochrome b560 family. As to quaternary structure, forms part of complex II containing four subunits: a 70 kDa flavoprotein (FP), a 27 kDa iron-sulfur protein (IP), a cytochrome B and a membrane-anchoring protein. Requires heme as cofactor.

Its subcellular location is the mitochondrion inner membrane. It functions in the pathway carbohydrate metabolism; tricarboxylic acid cycle. Its function is as follows. Membrane-anchoring subunit of succinate dehydrogenase (SDH) that is involved in complex II of the mitochondrial electron transport chain and is responsible for transferring electrons from succinate to ubiquinone (coenzyme Q). This is Succinate dehydrogenase cytochrome b560 subunit (SDH3) from Marchantia polymorpha (Common liverwort).